A 578-amino-acid polypeptide reads, in one-letter code: Potassium-transporting ATPase potassium-binding subunit (578 aa).

10 helical membrane-spanning segments follow: residues 3-23, 65-85, 134-154, 175-195, 261-281, 293-313, 397-417, 435-455, 503-523, and 543-563; these read NAIL…IPLG, SFSV…LNLL, GLTV…FALI, IVLY…VSQG, FSNL…CFTF, AIFI…GVSE, GLYG…LMVG, AMLI…LASI, IGLI…AIAG, and LLFI…SFFP.

The protein belongs to the KdpA family. In terms of assembly, the system is composed of three essential subunits: KdpA, KdpB and KdpC.

Its subcellular location is the cell membrane. Its function is as follows. Part of the high-affinity ATP-driven potassium transport (or Kdp) system, which catalyzes the hydrolysis of ATP coupled with the electrogenic transport of potassium into the cytoplasm. This subunit binds the extracellular potassium ions and delivers the ions to the membrane domain of KdpB through an intramembrane tunnel. The polypeptide is Potassium-transporting ATPase potassium-binding subunit (Clostridium perfringens (strain ATCC 13124 / DSM 756 / JCM 1290 / NCIMB 6125 / NCTC 8237 / Type A)).